The primary structure comprises 239 residues: uncharacterized protein (239 aa).

6 consecutive transmembrane segments (helical) span residues valine 30–isoleucine 50, leucine 76–isoleucine 96, leucine 107–isoleucine 127, phenylalanine 157–leucine 177, methionine 188–threonine 208, and leucine 214–leucine 234.

It belongs to the TatC family.

The protein localises to the plastid. Its subcellular location is the chloroplast membrane. This is an uncharacterized protein from Cyanidium caldarium (Red alga).